The primary structure comprises 329 residues: Probable nicotianamine synthase 7 (329 aa).

The protein belongs to the nicotianamine synthase (NAS)-like family.

The catalysed reaction is 3 S-adenosyl-L-methionine = nicotianamine + 3 S-methyl-5'-thioadenosine + 3 H(+). Synthesizes nicotianamine, a polyamine that is the first intermediate in the synthesis of the phytosiderophores of the mugineic acid type found in gramineae which serves as a sensor for the physiological iron status within the plant, and/or might be involved in the transport of iron. The protein is Probable nicotianamine synthase 7 (NAS7) of Hordeum vulgare (Barley).